A 28-amino-acid polypeptide reads, in one-letter code: M-poneritoxin-Dq4b/U1-poneritoxin-Dq4c/U1-poneritoxin-Dq4d (28 aa).

Met-20 carries the methionine sulfoxide; in form U1-PONTX-Dq4d modification. Ala-28 bears the Alanine amide; in form Dq-1362 and U1-PONTX-Dq4d mark.

Occurs in 3 forms, M-PONTX-Dq4b has an amidated Ala-28, U1-PONTX-Dq4d has an amidated Ala-28 and an oxidized Met-20, U1-PONTX-Dq4c has no modifications at either Met-20 or Ala-28. Expressed by the venom gland.

Its subcellular location is the secreted. Functionally, M-poneritoxin-Dq4b: this synthetic peptide has antimicrobial activity against Gram-positive bacteria B.amyloliquefacies S499 (MIC=0.1 mM), L.monocytogenes 2231 and S.aureus ATCC 29213, against Gram-negative bacteria P.putida BTP1, P.aeruginosa PaO1 and E.coli ATCC 10536, and against the fungi S.cerevisiae, R.mucilaginosa and C.cucumerinum. Not active against the fungi F.oxysporum and B.cinerea. The chain is M-poneritoxin-Dq4b/U1-poneritoxin-Dq4c/U1-poneritoxin-Dq4d from Dinoponera quadriceps (South American ant).